The chain runs to 366 residues: MTTKKTSPDLLLVIITLLLLTIGLIMVYSASAVWADYKFDDSFFFAKRQLLFAGIGVIAMFFIMNVDYWTWRTWSKLLMVICFFLLVLVLIPGVGMVRNGSRSWIGVGAFSIQPSEFMKLAMIAFLAKFLSEKQKNITSFRRGFVPALGIVFSAFLIIMCQPDLGTGTVMVGTCIVMIFVAGARIAHFVFLGLIGLSGFVGLVLSAPYRIKRITSYLNPWEDPLGSGFQIIQSLYAVGPGGLFGMGLGQSRQKFFYLPEPQTDFIFAILSEELGFIGGTLILLLFSVLLWRGIRIALGAPDLYGSFVAVGIISMIAIQVMINIGVVTGLIPVTGITLPFLSYGGSSLTLMLMAVGVLLNVSRYSRY.

Transmembrane regions (helical) follow at residues 10–30 (LLLVIITLLLLTIGLIMVYSA), 50–70 (LLFAGIGVIAMFFIMNVDYWT), 77–97 (LLMVICFFLLVLVLIPGVGMV), 105–125 (IGVGAFSIQPSEFMKLAMIAF), 144–164 (FVPALGIVFSAFLIIMCQPDL), 185–205 (IAHFVFLGLIGLSGFVGLVLS), 227–247 (GFQIIQSLYAVGPGGLFGMGL), 264–284 (FIFAILSEELGFIGGTLILLL), 306–326 (FVAVGIISMIAIQVMINIGVV), and 337–357 (LPFLSYGGSSLTLMLMAVGVL).

This sequence belongs to the SEDS family. SpoVE subfamily.

It is found in the cell membrane. Functionally, may play an essential role not only during sporulation, but also during vegetative growth. This Bacillus subtilis (strain 168) protein is Stage V sporulation protein E (spoVE).